The sequence spans 478 residues: Sedoheptulokinase (478 aa).

It belongs to the FGGY kinase family. As to expression, strongly expressed in liver, kidney and pancreas. Expressed at lower levels in placenta and heart. Very weakly expressed in lung and brain.

The protein resides in the cytoplasm. It catalyses the reaction sedoheptulose + ATP = D-sedoheptulose 7-phosphate + ADP + H(+). Functionally, acts as a modulator of macrophage activation through control of glucose metabolism. The protein is Sedoheptulokinase of Homo sapiens (Human).